The chain runs to 301 residues: Probable alpha-L-glutamate ligase (301 aa).

The region spanning Leu104–Glu287 is the ATP-grasp domain. ATP contacts are provided by residues Lys141, Glu178–Phe179, Asp187, and Arg211–Asn213. Residues Asp248, Glu260, and Asn262 each coordinate Mg(2+). 3 residues coordinate Mn(2+): Asp248, Glu260, and Asn262.

It belongs to the RimK family. Mg(2+) serves as cofactor. Mn(2+) is required as a cofactor.

The protein is Probable alpha-L-glutamate ligase of Maridesulfovibrio salexigens (strain ATCC 14822 / DSM 2638 / NCIMB 8403 / VKM B-1763) (Desulfovibrio salexigens).